Reading from the N-terminus, the 261-residue chain is uncharacterized protein (261 aa).

A signal peptide spans 1-22 (MGYLKKVGMCISLLIVIIFVTS). Residue Cys-23 is the site of N-palmitoyl cysteine attachment. The S-diacylglycerol cysteine moiety is linked to residue Cys-23.

It belongs to the staphylococcal tandem lipoprotein family.

It localises to the cell membrane. This is an uncharacterized protein from Staphylococcus aureus (strain bovine RF122 / ET3-1).